The following is a 181-amino-acid chain: MNRLKQLYENSIKPAIVKEFDIKNSMLIPKLDKIVISVGVGESSKDEKILQNMADTISLIAGQKAVITNAKKSIAGFKVREGFPVGIKVTLRKDNMFVFLDKLVSIALPRVKDFRGLSRDGFDGRGNYNFGLDEQLMFPEVEYDKILKTHGMNITIVTTANSDKEAFKLLELFGVPFAKGK.

Belongs to the universal ribosomal protein uL5 family. Part of the 50S ribosomal subunit; part of the 5S rRNA/L5/L18/L25 subcomplex. Contacts the 5S rRNA and the P site tRNA. Forms a bridge to the 30S subunit in the 70S ribosome.

Functionally, this is one of the proteins that bind and probably mediate the attachment of the 5S RNA into the large ribosomal subunit, where it forms part of the central protuberance. In the 70S ribosome it contacts protein S13 of the 30S subunit (bridge B1b), connecting the 2 subunits; this bridge is implicated in subunit movement. Contacts the P site tRNA; the 5S rRNA and some of its associated proteins might help stabilize positioning of ribosome-bound tRNAs. The protein is Large ribosomal subunit protein uL5 of Campylobacter hominis (strain ATCC BAA-381 / DSM 21671 / CCUG 45161 / LMG 19568 / NCTC 13146 / CH001A).